A 2723-amino-acid polypeptide reads, in one-letter code: Zinc finger protein 292 (2723 aa).

Residues 569–591 (YSCPICAKNFNSKETFVPHVTLH) form a C2H2-type 1 zinc finger. A disordered region spans residues 608 to 633 (RLGRPPKITTTNENQKTNTVAKQEQR). Polar residues predominate over residues 615–629 (ITTTNENQKTNTVAK). Serine 654 is subject to Phosphoserine. C2H2-type zinc fingers lie at residues 681–705 (FNCP…VKGH), 722–744 (VICQ…LQMH), 750–774 (YICI…RKEH), 779–803 (AKCM…EAQH), and 807–831 (YTCK…LDDH). Residues 825 to 834 (EKHLDDHSTP) are compositionally biased toward basic and acidic residues. The tract at residues 825–860 (EKHLDDHSTPPEKVLPPEAQLNSSGDSIQPSEVNQN) is disordered. The segment covering 844 to 860 (QLNSSGDSIQPSEVNQN) has biased composition (polar residues). A C2H2-type 7 zinc finger spans residues 1098-1123 (FSCQVEGCTRTYNSSQSIGKHMKTAH). Lysine 1117 is modified (N6-acetyllysine). At serine 1159 the chain carries Phosphoserine. The tract at residues 1331 to 1364 (SSTNAQQSAPEKVKKDRGRGPNGKERKPKHNKRA) is disordered. The segment covering 1341-1355 (EKVKKDRGRGPNGKE) has biased composition (basic and acidic residues). The C2H2-type 8; degenerate zinc finger occupies 1375–1397 (FICSRCYRAFTNPRSLGGHLSKR). The segment covering 1588 to 1627 (SFPNSGGPSQNFTSNSSRVSVISGPQNTRSSHLNKKGNSA) has biased composition (polar residues). A disordered region spans residues 1588 to 1634 (SFPNSGGPSQNFTSNSSRVSVISGPQNTRSSHLNKKGNSASKRRKKV). The stretch at 1827–1854 (QSEVSHKEDQIQEILEGLQKLKLENDLS) forms a coiled coil. 2 C2H2-type zinc fingers span residues 1902–1927 (FVCQ…GKIH) and 1947–1972 (FKCV…QLVH). Residues 1986–2023 (RPYGRKSQSENVPASRSTQVKKQLAMTEENKKESQPAL) are disordered. A compositionally biased stretch (polar residues) spans 1994-2006 (SENVPASRSTQVK). Lysine 2042 carries the N6-acetyllysine modification. The disordered stretch occupies residues 2074-2103 (NTQTKGRKIRRHKKEKEEKKRKKPVSQSLE). The span at 2078–2097 (KGRKIRRHKKEKEEKKRKKP) shows a compositional bias: basic residues. 4 C2H2-type zinc fingers span residues 2114 to 2139 (YRCV…QAVH), 2172 to 2197 (FRCQ…MKLH), 2216 to 2241 (FPCD…EADH), and 2256 to 2281 (YKCD…FNKH). Basic residues-rich tracts occupy residues 2285–2294 (HKAHLIRPRR) and 2312–2322 (KSKHRGTKHSR). The segment at 2285–2345 (HKAHLIRPRR…KKKNNLENKN (61 aa)) is disordered. The C2H2-type 15 zinc-finger motif lies at 2386 to 2410 (YPCMIKGCTSVVTSESNIIRHYKCH). The span at 2441-2452 (QEGAKNDVKDSD) shows a compositional bias: basic and acidic residues. 3 disordered regions span residues 2441–2480 (QEGA…EKDE), 2530–2564 (LKRV…VRKE), and 2606–2631 (QKKN…RKNI). Residues 2453–2470 (TCVSESNDNSRTTATVSQ) are compositionally biased toward polar residues. Residues 2606-2615 (QKKNTDKDHP) are compositionally biased toward basic and acidic residues.

It belongs to the krueppel C2H2-type zinc-finger protein family.

The protein localises to the nucleus. May be involved in transcriptional regulation. This Homo sapiens (Human) protein is Zinc finger protein 292 (ZNF292).